Consider the following 226-residue polypeptide: uncharacterized protein (226 aa).

Residues 75–226 (YTIRNVTKDD…KGWLRMVKRI (152 aa)) enclose the N-acetyltransferase domain.

The protein belongs to the acetyltransferase family.

This is an uncharacterized protein from Methanocaldococcus jannaschii (strain ATCC 43067 / DSM 2661 / JAL-1 / JCM 10045 / NBRC 100440) (Methanococcus jannaschii).